Consider the following 34-residue polypeptide: Photosystem II reaction center protein M (34 aa).

The chain crosses the membrane as a helical span at residues 5 to 25 (ILAFIATALFILIPTAFLLIL).

Belongs to the PsbM family. In terms of assembly, PSII is composed of 1 copy each of membrane proteins PsbA, PsbB, PsbC, PsbD, PsbE, PsbF, PsbH, PsbI, PsbJ, PsbK, PsbL, PsbM, PsbT, PsbX, PsbY, PsbZ, Psb30/Ycf12, at least 3 peripheral proteins of the oxygen-evolving complex and a large number of cofactors. It forms dimeric complexes.

Its subcellular location is the plastid. It is found in the chloroplast thylakoid membrane. One of the components of the core complex of photosystem II (PSII). PSII is a light-driven water:plastoquinone oxidoreductase that uses light energy to abstract electrons from H(2)O, generating O(2) and a proton gradient subsequently used for ATP formation. It consists of a core antenna complex that captures photons, and an electron transfer chain that converts photonic excitation into a charge separation. This subunit is found at the monomer-monomer interface. The chain is Photosystem II reaction center protein M from Angiopteris evecta (Mule's foot fern).